Reading from the N-terminus, the 460-residue chain is Phosphoglucosamine mutase (460 aa).

The active-site Phosphoserine intermediate is Ser-102. Residues Ser-102, Asp-241, Asp-243, and Asp-245 each contribute to the Mg(2+) site. Ser-102 carries the post-translational modification Phosphoserine.

The protein belongs to the phosphohexose mutase family. Mg(2+) serves as cofactor. Post-translationally, activated by phosphorylation.

The catalysed reaction is alpha-D-glucosamine 1-phosphate = D-glucosamine 6-phosphate. Functionally, catalyzes the conversion of glucosamine-6-phosphate to glucosamine-1-phosphate. This is Phosphoglucosamine mutase from Verminephrobacter eiseniae (strain EF01-2).